The sequence spans 31 residues: Histone H1.3 (31 aa).

This sequence belongs to the histone H1/H5 family.

It localises to the nucleus. The protein resides in the chromosome. Functionally, histones H1 are necessary for the condensation of nucleosome chains into higher-order structures. In Triticum aestivum (Wheat), this protein is Histone H1.3.